Reading from the N-terminus, the 81-residue chain is Small ribosomal subunit protein bS16 (81 aa).

This sequence belongs to the bacterial ribosomal protein bS16 family.

This Phytoplasma mali (strain AT) protein is Small ribosomal subunit protein bS16.